Reading from the N-terminus, the 232-residue chain is 5'-methylthioadenosine/S-adenosylhomocysteine nucleosidase (232 aa).

Catalysis depends on Glu-12, which acts as the Proton acceptor. Substrate contacts are provided by residues Gly-78, Ile-152, and 173-174 (ME). Asp-197 (proton donor) is an active-site residue.

The protein belongs to the PNP/UDP phosphorylase family. MtnN subfamily. In terms of assembly, homodimer.

The enzyme catalyses S-adenosyl-L-homocysteine + H2O = S-(5-deoxy-D-ribos-5-yl)-L-homocysteine + adenine. It carries out the reaction S-methyl-5'-thioadenosine + H2O = 5-(methylsulfanyl)-D-ribose + adenine. The catalysed reaction is 5'-deoxyadenosine + H2O = 5-deoxy-D-ribose + adenine. The protein operates within amino-acid biosynthesis; L-methionine biosynthesis via salvage pathway; S-methyl-5-thio-alpha-D-ribose 1-phosphate from S-methyl-5'-thioadenosine (hydrolase route): step 1/2. Its function is as follows. Catalyzes the irreversible cleavage of the glycosidic bond in both 5'-methylthioadenosine (MTA) and S-adenosylhomocysteine (SAH/AdoHcy) to adenine and the corresponding thioribose, 5'-methylthioribose and S-ribosylhomocysteine, respectively. Also cleaves 5'-deoxyadenosine, a toxic by-product of radical S-adenosylmethionine (SAM) enzymes, into 5-deoxyribose and adenine. Thus, is required for in vivo function of the radical SAM enzymes biotin synthase and lipoic acid synthase, that are inhibited by 5'-deoxyadenosine accumulation. The sequence is that of 5'-methylthioadenosine/S-adenosylhomocysteine nucleosidase from Enterobacter sp. (strain 638).